Here is a 329-residue protein sequence, read N- to C-terminus: Transcription factor MYB2 (329 aa).

2 consecutive HTH myb-type domains span residues 17-69 (GGDL…LNYL) and 70-124 (RPDL…QKHA). 2 consecutive DNA-binding regions (H-T-H motif) follow at residues 45–69 (WNSL…LNYL) and 97–120 (WSKI…RTRV). Composition is skewed to low complexity over residues 155–166 (AAAGQQQQQEGG) and 217–235 (LSST…GAGA). Disordered stretches follow at residues 155–189 (AAAG…PELP) and 206–242 (GAQS…WPTQ).

In terms of tissue distribution, highly expressed in leaves. Expressed in roots and shoots. Expressed at low levels in flowers.

It is found in the nucleus. Functionally, transcription factor involved in abiotic stress responses. Plays a regulatory role in tolerance to salt, cold, and drought stresses. Positively regulates the expression of genes involved in proline synthesis and transport, and genes involved in reactive oxygen species (ROS) scavenging such as peroxidase, superoxide dismutase and catalase during salt stress. Transactivates stress-related genes, including LEA3, RAB16A and DREB2A during salt stress. The sequence is that of Transcription factor MYB2 from Oryza sativa subsp. japonica (Rice).